The primary structure comprises 436 residues: YRLTYYTPDYQVAETDILAAFRMTPQPGVPAEECGAAVAAESSTGTWTTVWTDGLTQLDKYKGRCYDLEPVPGENNQYIAYVAYPIDLFEEGSVTNLLTSIVGNVFGFKALRALRLEDLRIPPAYVKTFWGPPHGIQVERDKLNKYGRPLLGCTIKPKLGLSAKNYGRAVYECLRGGLDFTKDDENVNSQSFMRWRDRFLFCAEAIYKAQSETGEIKGHYLNATAGTCEEMYKRANYAAQIGVPIVMHDYLTGGFTANTSLAMFCRDNGLLLHIHRAMHAVIDRQRNHGIHFRVLAKTLRMSGGDHLHSGTVVGKLEGEREVTLGFVDLMRDPYVEKDRSRGIYFTQDWVGLGGTIPVASGGIHVWHMPALTEIFGDDACLQFGGGTLGHPWGNAPGAAANRVASEACVQARNEGRDLSREGGDVIREACKWSPEL.

Positions 104 and 154 each coordinate substrate. K156 functions as the Proton acceptor in the catalytic mechanism. Position 158 (K158) interacts with substrate. Mg(2+)-binding residues include K182, D184, and E185. Position 182 is an N6-carboxylysine (K182). H275 serves as the catalytic Proton acceptor. 3 residues coordinate substrate: R276, H308, and S360.

Belongs to the RuBisCO large chain family. Type I subfamily. In terms of assembly, heterohexadecamer of 8 large chains and 8 small chains; disulfide-linked. The disulfide link is formed within the large subunit homodimers. Requires Mg(2+) as cofactor. Post-translationally, the disulfide bond which can form in the large chain dimeric partners within the hexadecamer appears to be associated with oxidative stress and protein turnover.

It is found in the plastid. Its subcellular location is the chloroplast. The enzyme catalyses 2 (2R)-3-phosphoglycerate + 2 H(+) = D-ribulose 1,5-bisphosphate + CO2 + H2O. It carries out the reaction D-ribulose 1,5-bisphosphate + O2 = 2-phosphoglycolate + (2R)-3-phosphoglycerate + 2 H(+). Its function is as follows. RuBisCO catalyzes two reactions: the carboxylation of D-ribulose 1,5-bisphosphate, the primary event in carbon dioxide fixation, as well as the oxidative fragmentation of the pentose substrate in the photorespiration process. Both reactions occur simultaneously and in competition at the same active site. This Euglena anabaena (Euglenaria anabaena) protein is Ribulose bisphosphate carboxylase large chain.